Consider the following 102-residue polypeptide: Acid shock protein (102 aa).

The first 21 residues, 1 to 21 (MKKVLALVVAAAMGLSSAAFA), serve as a signal peptide directing secretion. Residues 22 to 41 (AETATTPAPTATTTKAAPAK) are compositionally biased toward low complexity. The propeptide occupies 22–58 (AETATTPAPTATTTKAAPAKTTHHKKQHKAAPAQKAQ). Positions 22–102 (AETATTPAPT…PAKPAAQPAA (81 aa)) are disordered. Positions 80–90 (AAKKHAKKHSH) are enriched in basic residues. Positions 91-102 (QQPAKPAAQPAA) are enriched in low complexity.

This sequence belongs to the Asr family. Proteolytic processing gives rise to the active protein.

The protein localises to the periplasm. In terms of biological role, required for growth and/or survival at acidic conditions. The polypeptide is Acid shock protein (Escherichia coli O45:K1 (strain S88 / ExPEC)).